The following is a 311-amino-acid chain: MNKYDLIERMNTRFAELEVTLHQLHQQLDDLPLIAARVFSLPEIEKGTEHQPIEQITVNITEGEHAKKLGLQHFQRLFLHHQGQHVSSKAALRLPGVLCFSVTDKELIECQDIIKKTNQLKAELEHIITVESGLPSEQRFEFVHTHLHGLITLNTYRTITPLINPSSVRFGWANKHIIKNVTREDILLQLEKSLNAGRAVPPFTREQWRELISLEINDVQRLPEKTRLKIKRPVKVQPIARVWYQEQQKQVQHPCPMPLIAFCQRQSGAELPKLGELTDYDVKHIKHKYKPDAKPLRLLVPRLHLYVELEP.

It belongs to the Tus family.

It localises to the cytoplasm. In terms of biological role, trans-acting protein required for termination of DNA replication. Binds to DNA replication terminator sequences (terA to terF) to prevent the passage of replication forks. The termination efficiency will be affected by the affinity of this protein for the terminator sequence. This chain is DNA replication terminus site-binding protein, found in Yersinia pseudotuberculosis serotype O:1b (strain IP 31758).